Reading from the N-terminus, the 814-residue chain is Probable G-protein coupled receptor 156 (814 aa).

At 1 to 47 the chain is on the extracellular side; it reads MEPEINCSELCDSFPGQELDRRPLHDLCKTTITSSHHSSKTISSLSP. Residue Asn6 is glycosylated (N-linked (GlcNAc...) asparagine). The chain crosses the membrane as a helical span at residues 48-68; that stretch reads VLLGIVWTFLSCGLLLILFFL. Residues 69-86 lie on the Cytoplasmic side of the membrane; it reads AFTIHCRKNRIVKMSSPN. The chain crosses the membrane as a helical span at residues 87-107; it reads LNIVTLLGSCLTYSSAYLFGI. Topologically, residues 108–118 are extracellular; the sequence is QDVLVGSSMET. The helical transmembrane segment at 119 to 139 threads the bilayer; sequence LIQTRLSMLCIGTSLVFGPIL. Residues 140-164 are Cytoplasmic-facing; it reads GKSWRLYKVFTQRVPDKRVIIKDLQ. Residues 165–185 traverse the membrane as a helical segment; sequence LLGLVAALLMADVILLMTWVL. The Extracellular segment spans residues 186–222; the sequence is TDPIQCLQILSVSMTVTGKDVSCTSTSTHFCASRYSD. The chain crosses the membrane as a helical span at residues 223 to 243; that stretch reads VWIALIWGCKGLLLLYGAYLA. Residues 244 to 257 are Cytoplasmic-facing; it reads GLTGHVSSPPVNQS. A helical membrane pass occupies residues 258 to 278; the sequence is LTIMVGVNLLVLAAGLLFVVT. Residues 279-288 are Extracellular-facing; it reads RYLHSWPNLV. A helical transmembrane segment spans residues 289–309; it reads FGLTSGGIFVCTTTINCFIFI. Residues 310–814 are Cytoplasmic-facing; the sequence is PQLKQWKAFE…FKDDLKPTLV (505 aa). A coiled-coil region spans residues 354-390; that stretch reads EKSSMERLLTEKNAVIESLQEQVNNAKEKIVRLMSAE. Disordered stretches follow at residues 422–545, 557–724, and 769–792; these read AQGP…SSVI, GLGP…PEQW, and SSSDSSDSGTSDTDPEPTGGLASW. A compositionally biased stretch (polar residues) spans 443 to 454; the sequence is SQCTSGPSSYAQ. Basic and acidic residues predominate over residues 468–484; sequence GKEEKISDSKDFSDHLD. A compositionally biased stretch (polar residues) spans 486 to 496; sequence GCSQKPWTEQS. The span at 523–545 shows a compositional bias: basic and acidic residues; sequence QRQRHLENSEEPPERRSRVSSVI. The span at 563-581 shows a compositional bias: polar residues; that stretch reads SLSTAPSCHQQTWKNSAAF. Basic residues predominate over residues 599–610; the sequence is VRRRRAAQRARS. Over residues 639–651 the composition is skewed to polar residues; sequence NGDSPSLAPQTTD. Positions 769-780 are enriched in low complexity; it reads SSSDSSDSGTSD.

Belongs to the G-protein coupled receptor 3 family. GABA-B receptor subfamily. As to expression, ubiquitous expression both in the CNS and in peripheral tissues. Very high expression in fetal brain and testis relative to expression in other tissues.

It is found in the cell membrane. In terms of biological role, orphan G-protein coupled receptor involved in the regulation of hair cell orientation in mechanosensory organs of the inner ear. It is required to trigger a 180 degree reversal in hair cell orientation, creating a virtual line of polarity reversal (LPR) across which stereociliary bundles are arranged in opposite orientations. This Homo sapiens (Human) protein is Probable G-protein coupled receptor 156 (GPR156).